A 512-amino-acid chain; its full sequence is Sodium/proline symporter (512 aa).

Helical transmembrane passes span 16 to 36 (WQTY…GFYG), 54 to 74 (IGPY…WMIM), 85 to 105 (LSAM…YFVV), 139 to 159 (IISG…GFVS), 174 to 194 (FGLI…GYLA), 200 to 220 (FFQG…AMMN), 240 to 260 (LFKG…LGYF), 286 to 306 (ISWM…GIAF), 327 to 347 (VLFH…AIMS), 381 to 401 (FVMI…AIAW), 410 to 430 (LVGN…LFAL), 438 to 458 (AGAV…IAWI), and 467 to 487 (IFGL…TYVV).

It belongs to the sodium:solute symporter (SSF) (TC 2.A.21) family.

The protein resides in the cell membrane. The enzyme catalyses L-proline(in) + Na(+)(in) = L-proline(out) + Na(+)(out). In terms of biological role, catalyzes the sodium-dependent uptake of extracellular L-proline. Since most S.aureus strains are L-proline auxotrophs, this transporter may aid the bacterial persistence during an infection of tissues with low proline concentrations. In Staphylococcus aureus (strain Newman), this protein is Sodium/proline symporter (putP).